Consider the following 379-residue polypeptide: MLPSHLNGHSPLARRRPRLSAASPPATGDSDAAAAAADAPLAEHDRIYFQSYSHIGIHEAMIKDRVRTDAYRSAIMHHQKFIEGKVVMDVGCGTGILSVFCARAGAKCVYAVEASEMATQAREIVKANNLDDKVVVVHGRVEDVEVEDKVDVIISEWMGYMLLYESMLPSVLFARDKWLKPGGLILPSHATLFMAPITNSERYEGSVDFWSDVYGINMSALVPLAKKFTSEEPSIEIIGGENVLSWPFVVKHIDCYTFKAEELKSITTKYKVSSMMLAPIHGFGLWFEVEFNGPSNPTDKSPSDLNPLDVIRTKRRRGSEDPVVLSTAPEDEPTHWHQTILYFPDPIEVKQDQIIEGSVKVSQSEENPRFLNIQLDCTM.

The tract at residues 1–35 is disordered; that stretch reads MLPSHLNGHSPLARRRPRLSAASPPATGDSDAAAA. Residues 19–35 are compositionally biased toward low complexity; the sequence is LSAASPPATGDSDAAAA. The SAM-dependent MTase PRMT-type domain maps to 45–379; that stretch reads DRIYFQSYSH…FLNIQLDCTM (335 aa). Residues histidine 58, arginine 67, glycine 91, glutamate 113, and glutamate 142 each coordinate S-adenosyl-L-methionine. Residues glutamate 156 and glutamate 165 contribute to the active site.

It belongs to the class I-like SAM-binding methyltransferase superfamily. Protein arginine N-methyltransferase family. PRMT6 subfamily.

Arginine methyltransferase that can both catalyze the formation of omega-N monomethylarginine (MMA) and asymmetrical dimethylarginine (aDMA). This is Probable protein arginine N-methyltransferase 6.1 (PRMT6.1) from Oryza sativa subsp. indica (Rice).